Reading from the N-terminus, the 68-residue chain is Protein SrnB (68 aa).

A helical membrane pass occupies residues 23 to 42 (YALIGLLAVCATVLCFSLIF).

This sequence belongs to the Hok/Gef family.

The protein localises to the cell inner membrane. In terms of biological role, toxic component of a type I toxin-antitoxin (TA) system. Its normal function is believed to be effective plasmid stabilization through postsegregational killing of cells that have lost the F plasmid. Promotes degradation of stable RNA in E.coli. The polypeptide is Protein SrnB (srnB) (Escherichia coli (strain K12)).